The following is a 136-amino-acid chain: Ribosome-binding factor A (136 aa).

It belongs to the RbfA family. As to quaternary structure, monomer. Binds 30S ribosomal subunits, but not 50S ribosomal subunits or 70S ribosomes.

It localises to the cytoplasm. In terms of biological role, one of several proteins that assist in the late maturation steps of the functional core of the 30S ribosomal subunit. Associates with free 30S ribosomal subunits (but not with 30S subunits that are part of 70S ribosomes or polysomes). Required for efficient processing of 16S rRNA. May interact with the 5'-terminal helix region of 16S rRNA. This chain is Ribosome-binding factor A, found in Cellvibrio japonicus (strain Ueda107) (Pseudomonas fluorescens subsp. cellulosa).